We begin with the raw amino-acid sequence, 143 residues long: Transcription antitermination protein NusB (143 aa).

It belongs to the NusB family.

Its function is as follows. Involved in transcription antitermination. Required for transcription of ribosomal RNA (rRNA) genes. Binds specifically to the boxA antiterminator sequence of the ribosomal RNA (rrn) operons. This Clostridium botulinum (strain Kyoto / Type A2) protein is Transcription antitermination protein NusB.